A 739-amino-acid chain; its full sequence is Endoglucanase F (739 aa).

The first 27 residues, 1–27 (MKKILAFLLTVALVAVVAIPQAVVSFA), serve as a signal peptide directing secretion. A catalytic region spans residues 28–470 (ADFNYGEALQ…AKMYEKYGGE (443 aa)). Residue D84 is the Nucleophile of the active site. Catalysis depends on residues H400, D438, and E447. The 160-residue stretch at 480 to 639 (TPGEEFYVEA…NVRVWGKVPD (160 aa)) folds into the CBM3 domain. Residues 664-737 (PGIMLGDVNF…ILKLIEKFPA (74 aa)) form the Dockerin domain.

The protein belongs to the glycosyl hydrolase 9 (cellulase E) family. It depends on Ca(2+) as a cofactor.

It catalyses the reaction Endohydrolysis of (1-&gt;4)-beta-D-glucosidic linkages in cellulose, lichenin and cereal beta-D-glucans.. This enzyme catalyzes the endohydrolysis of 1,4-beta-glucosidic linkages in cellulose, lichenin and cereal beta-D-glucans. This is Endoglucanase F (celF) from Acetivibrio thermocellus (strain ATCC 27405 / DSM 1237 / JCM 9322 / NBRC 103400 / NCIMB 10682 / NRRL B-4536 / VPI 7372) (Clostridium thermocellum).